Consider the following 383-residue polypeptide: MGEDDPKGRQRLKLLLVAARHHLSGPDLRSVVHYLERDDVGFQVTLQLADPSQQPELLELHRLVITPALIKLSPAPKQVFAGSNILQQLKGWVPRWQQDGVVSGLGLSLRPTELDGSRTQKELQLEDQLLVLRQENETLIDRIHAQERLLRMVAHELRTPLTAAALALQSQRLGQIDMTRFQDVITRRLEEMEALSKDLLEVGTTRWETLFNPQRLDLASVSAEVILELEKLWLGRNVEIRTDIPSDLPKVFADQRRMRQVLLNLLENALKYTGNGGHITLTMLHRTSQRVEVSVCDSGPGIPTEEQQRIFLDRVRLPQTSDRTTGFGVGLSVCRRIVEVHGGRIWVVSEPGEGACFTFTVPIWQGQGQEWGQAVLTEGELEP.

The Histidine kinase domain occupies 152–365 (MVAHELRTPL…CFTFTVPIWQ (214 aa)). Phosphohistidine; by autocatalysis is present on H155.

As to quaternary structure, homooligomerizes. Interacts with KaiC. Participates in the KaiABC clock complex, whose core is composed of a KaiC homohexamer, 6 KaiB and up to 6 KaiA dimers. SasA and KaiB(fs) compete to bind to KaiC.

It catalyses the reaction ATP + protein L-histidine = ADP + protein N-phospho-L-histidine.. Its function is as follows. Member of the two-component regulatory system SasA/RpaA involved in genome-wide circadian gene expression. One of several clock output pathways. Participates in the Kai clock protein complex, the main circadian regulator in cyanobacteria, via its interaction with KaiC. KaiC enhances the autophosphorylation activity of SasA, which then transfers its phosphate group to RpaA to activate it. In addition to its output function, recruits fold-shifted KaiB (KaiB(fs)) to KaiC to cooperatively form the KaiB(6):KaiC(6) complex (independent of SasA kinase activity). Required for robustness of the circadian rhythm of gene expression and is involved in clock output, also required for adaptation to light/dark cycles. The protein is Adaptive-response sensory kinase SasA of Parasynechococcus marenigrum (strain WH8102).